The primary structure comprises 510 residues: Anaerobic nitric oxide reductase transcription regulator NorR (510 aa).

Residues 188 to 417 (IIGNSQGMRT…LEHVIKRAAV (230 aa)) enclose the Sigma-54 factor interaction domain. Residues 216-223 (GETGVGKE) and 279-288 (ADGGTLFLDE) contribute to the ATP site. The H-T-H motif DNA-binding region spans 486 to 505 (WAATARQLELDSGNLHRLAK).

It participates in nitrogen metabolism; nitric oxide reduction. In terms of biological role, required for the expression of anaerobic nitric oxide (NO) reductase, acts as a transcriptional activator for at least the norVW operon. Activation also requires sigma-54. The polypeptide is Anaerobic nitric oxide reductase transcription regulator NorR (Vibrio vulnificus (strain CMCP6)).